A 344-amino-acid chain; its full sequence is MIKVGIVGGTGYTGVELLRLLAQHPQAEVAVITSRSEAGVAVADMYPNLRGHYDGLAFSVPDSKALGACDVVFFATPHGVAHALAGELLAAGTKVIDLSADFRLQDATEWGKWYGQPHGAPELLKDAVYGLPEVNREKIRQARLIAVPGCYPTATQLGFLPLLEAGLADPSRLIADCKSGVSGAGRGAAVGSLFCEAGESMKAYAVKGHRHLPEISQGLRLAAGKDIGLTFVPHLTPMIRGIHATLYANVVDTSVDLQALFEKRYADEPFVDVMPAGSHPETRSVRGANVCRIAVHRPQGGDLVVVLSVIDNLVKGASGQAVQNLNILFGLDERMGLSHAGLLP.

Cysteine 150 is a catalytic residue.

This sequence belongs to the NAGSA dehydrogenase family. Type 1 subfamily.

The protein resides in the cytoplasm. It carries out the reaction N-acetyl-L-glutamate 5-semialdehyde + phosphate + NADP(+) = N-acetyl-L-glutamyl 5-phosphate + NADPH + H(+). The protein operates within amino-acid biosynthesis; L-arginine biosynthesis; N(2)-acetyl-L-ornithine from L-glutamate: step 3/4. In terms of biological role, catalyzes the NADPH-dependent reduction of N-acetyl-5-glutamyl phosphate to yield N-acetyl-L-glutamate 5-semialdehyde. The sequence is that of N-acetyl-gamma-glutamyl-phosphate reductase 1 from Pseudomonas putida (strain ATCC 47054 / DSM 6125 / CFBP 8728 / NCIMB 11950 / KT2440).